Here is a 213-residue protein sequence, read N- to C-terminus: RNA polymerase I subunit H (213 aa).

Basic and acidic residues predominate over residues 1-19 (MVERMKKDTGDETKTKVQE). The disordered stretch occupies residues 1-70 (MVERMKKDTG…AREFTDKPWR (70 aa)). Pro residues predominate over residues 21 to 31 (PPSPSPPPPPP). Composition is skewed to basic and acidic residues over residues 43 to 53 (VPEREKKQIER) and 60 to 69 (HAREFTDKPW).

Expressed during spermatogenesis, initially at pachytene stage with abundance increasing in round spermatids and decreasing again during spermatid elongation.

In terms of biological role, may be involved in male sterility. This chain is RNA polymerase I subunit H, found in Mus musculus (Mouse).